We begin with the raw amino-acid sequence, 96 residues long: (4S)-4-hydroxy-5-phosphonooxypentane-2,3-dione isomerase (96 aa).

The ABM domain maps to His-2–Phe-91.

Belongs to the LsrG family. As to quaternary structure, homodimer.

The protein resides in the cytoplasm. It catalyses the reaction (2S)-2-hydroxy-3,4-dioxopentyl phosphate = 3-hydroxy-2,4-dioxopentyl phosphate. Involved in the degradation of phospho-AI-2, thereby terminating induction of the lsr operon and closing the AI-2 signaling cycle. Catalyzes the conversion of (4S)-4-hydroxy-5-phosphonooxypentane-2,3-dione (P-DPD) to 3-hydroxy-5-phosphonooxypentane-2,4-dione (P-HPD). In Escherichia coli O157:H7, this protein is (4S)-4-hydroxy-5-phosphonooxypentane-2,3-dione isomerase.